Consider the following 327-residue polypeptide: UDP-N-acetylenolpyruvoylglucosamine reductase (327 aa).

Positions 42-223 (RTGGLAELFY…RAAMDEVALH (182 aa)) constitute an FAD-binding PCMH-type domain. The active site involves Arg-188. Ser-237 serves as the catalytic Proton donor. Glu-307 is an active-site residue.

This sequence belongs to the MurB family. FAD serves as cofactor.

It is found in the cytoplasm. It catalyses the reaction UDP-N-acetyl-alpha-D-muramate + NADP(+) = UDP-N-acetyl-3-O-(1-carboxyvinyl)-alpha-D-glucosamine + NADPH + H(+). It participates in cell wall biogenesis; peptidoglycan biosynthesis. Cell wall formation. This is UDP-N-acetylenolpyruvoylglucosamine reductase from Bartonella tribocorum (strain CIP 105476 / IBS 506).